Reading from the N-terminus, the 143-residue chain is Hemoglobin cathodic subunit alpha (143 aa).

Ser2 carries the N-acetylserine modification. The Globin domain maps to 2-143 (SLTAKDKTLV…VSAALADKYR (142 aa)). Position 59 (His59) interacts with O2. Position 89 (His89) interacts with heme b.

This sequence belongs to the globin family. Heterotetramer of two alpha chains and two beta chains. Red blood cells.

Involved in oxygen transport from the gills to the various peripheral tissues. The protein is Hemoglobin cathodic subunit alpha of Conger conger (Conger eel).